We begin with the raw amino-acid sequence, 619 residues long: Probable serine/threonine-protein kinase WNK8 (619 aa).

The span at 1 to 14 (MSGARRCGDRRSER) shows a compositional bias: basic and acidic residues. The interval 1–30 (MSGARRCGDRRSERSSVVGDNRNGYVETDP) is disordered. Residues 35–291 (GRLSEVLGKG…AEELLLDPFL (257 aa)) form the Protein kinase domain. ATP is bound by residues 115-118 (TELF) and Lys163. Asp180 serves as the catalytic Proton acceptor. Disordered stretches follow at residues 293-335 (PPQN…AKTT), 419-464 (YADD…PGPH), 508-555 (CSAS…SMVD), and 585-619 (GFRDPTTYGSSSSSSSSQHRRRSSSKVDHKHHYMF). The span at 419–428 (YADDDDDDDV) shows a compositional bias: acidic residues. A compositionally biased stretch (low complexity) spans 439 to 448 (SSSPTSSQGS). Basic residues predominate over residues 602–619 (QHRRRSSSKVDHKHHYMF).

Belongs to the protein kinase superfamily. Ser/Thr protein kinase family. WNK subfamily.

It carries out the reaction L-seryl-[protein] + ATP = O-phospho-L-seryl-[protein] + ADP + H(+). It catalyses the reaction L-threonyl-[protein] + ATP = O-phospho-L-threonyl-[protein] + ADP + H(+). The sequence is that of Probable serine/threonine-protein kinase WNK8 (WNK8) from Oryza sativa subsp. japonica (Rice).